Here is a 391-residue protein sequence, read N- to C-terminus: MESLKEMRKAQKSEGPAAILAIGTATPDNVYIQADYPDYYFKITKSEHMTELKDKFKTLCEKSMIRKRHMCFSQEFLKANPEVCKHMGKSLNARQDIAVVETPRIGKEAAVKAIKEWGHPKSSITHLIFCTSAGVDMPGADYQLTRMLGLNPSVKRMMIYQQGCYAGGTVLRLAKDLAENNKGSRVLVVCSELTAPTFRGPSPDAVDSLVGQALFADGAAALVVGADPDTSVERALYYIVSASQMLLPDSDGAIEGHIREEGLTVHLKKDVPALFSANIDTPLVEAFRPLGISDWNSIFWIAHPGGPAILDQIEVKLGLKEDKLRASKHVMSEYGNMSSSCVLFVLDEMRNKSLQDGKSTTGEGLDWGVLFGFGPGLTVETVVLRSVPVEA.

Cys-164 is an active-site residue.

The protein belongs to the thiolase-like superfamily. Chalcone/stilbene synthases family. In terms of assembly, homodimer.

It catalyses the reaction N-methylanthraniloyl-CoA + 3 malonyl-CoA + 3 H(+) = 1,3-dihydroxy-N-methylacridone + 3 CO2 + 4 CoA + H2O. The chain is Acridone synthase 2 (ACS2) from Ruta graveolens (Common rue).